We begin with the raw amino-acid sequence, 212 residues long: Ribosomal RNA large subunit methyltransferase E (212 aa).

Positions 57, 59, 77, 93, and 122 each coordinate S-adenosyl-L-methionine. The Proton acceptor role is filled by K162.

Belongs to the class I-like SAM-binding methyltransferase superfamily. RNA methyltransferase RlmE family.

The protein resides in the cytoplasm. It catalyses the reaction uridine(2552) in 23S rRNA + S-adenosyl-L-methionine = 2'-O-methyluridine(2552) in 23S rRNA + S-adenosyl-L-homocysteine + H(+). Specifically methylates the uridine in position 2552 of 23S rRNA at the 2'-O position of the ribose in the fully assembled 50S ribosomal subunit. The polypeptide is Ribosomal RNA large subunit methyltransferase E (Coxiella burnetii (strain CbuK_Q154) (Coxiella burnetii (strain Q154))).